Reading from the N-terminus, the 372-residue chain is F-box/kelch-repeat protein At5g48990 (372 aa).

The F-box domain occupies 14 to 60; it reads SSPNPSLPEDLIVSILARVSRSYYTNLSVVSKTFRSILTSPELYKTR. One copy of the Kelch repeat lies at 176 to 222; that stretch reads RTYFPGSSEKPDSLNCVEVYNTNTQTWNPVPPQKRKLKFGNMEGKIY.

The polypeptide is F-box/kelch-repeat protein At5g48990 (Arabidopsis thaliana (Mouse-ear cress)).